Here is a 319-residue protein sequence, read N- to C-terminus: Probable murein peptide carboxypeptidase (319 aa).

S116 functions as the Nucleophile in the catalytic mechanism. Residues E214 and H284 each act as charge relay system in the active site.

This sequence belongs to the peptidase S66 family.

It is found in the cytoplasm. It functions in the pathway cell wall degradation; peptidoglycan degradation. In terms of biological role, may be involved in the degradation of peptidoglycan by catalyzing the cleavage of the terminal D-alanine residue from cytoplasmic murein peptides. The chain is Probable murein peptide carboxypeptidase (ykfA) from Bacillus subtilis (strain 168).